A 1669-amino-acid polypeptide reads, in one-letter code: Collagen alpha-1(IV) chain (1669 aa).

The first 27 residues, 1–27 (MGPRLSVWLLLLFAALLLHEERSRAAA), serve as a signal peptide directing secretion. Positions 28–172 (KGDCGGSGCG…LGHVPGTLLK (145 aa)) are cleaved as a propeptide — N-terminal propeptide (7S domain). Residues 47–1443 (QKGERGLPGL…MGPPGTPSVD (1397 aa)) are disordered. Low complexity predominate over residues 92 to 104 (TRGPPGAAGYPGN). Asn-126 carries an N-linked (GlcNAc...) asparagine glycan. The segment at 173–1440 (GERGFPGIPG…PGSMGPPGTP (1268 aa)) is triple-helical region. Residues 196 to 214 (VGPPGFTGPPGPPGPPGPP) show a composition bias toward pro residues. 3-hydroxyproline occurs at positions 204, 207, and 210. Residues 234–247 (QGVSGPPGVPGQAQ) are compositionally biased toward low complexity. The segment covering 289–298 (PGKDGEKGER) has biased composition (basic and acidic residues). A compositionally biased stretch (pro residues) spans 367–376 (PGQPGPPGFP). Residues 377 to 387 (TPGQAGAPGFP) show a composition bias toward low complexity. Pro residues-rich tracts occupy residues 413–424 (PGPPGPPGPPGQ) and 436–448 (PGPP…PGTP). Residues 485 to 494 (PGEIGFPGQP) show a composition bias toward low complexity. Composition is skewed to basic and acidic residues over residues 497–508 (KGDRGLPGRDGL) and 535–545 (FDMRLKGDKGD). The span at 586 to 595 (GPPGGVGFPG) shows a compositional bias: gly residues. 2 positions are modified to 3-hydroxyproline: Pro-587 and Pro-602. Pro-603 is modified (4-hydroxyproline). A 3-hydroxyproline modification is found at Pro-605. Pro-606 is modified (4-hydroxyproline). Low complexity predominate over residues 611–620 (IGPVGEKGQA). The segment covering 621 to 630 (GFPGGPGSPG) has biased composition (gly residues). 4 positions are modified to 4-hydroxyproline: Pro-623, Pro-626, Pro-629, and Pro-632. Pro-647 is modified (3-hydroxyproline). Residues 715-731 (RPGFNGLPGNPGPQGQK) are compositionally biased toward low complexity. The span at 758–767 (GSIGGPGVPG) shows a compositional bias: gly residues. Residues 784–802 (PGPPGVQGPAGPPGVPGIG) show a composition bias toward pro residues. The span at 803–817 (PPGAMGPPGGQGPPG) shows a compositional bias: gly residues. Composition is skewed to low complexity over residues 847–875 (SQGL…PGFP) and 994–1003 (DPGLSGTPGS). A compositionally biased stretch (gly residues) spans 1011-1020 (GSVGGMGLPG). 3-hydroxyproline is present on Pro-1214. Over residues 1220–1230 (QPGLPGTPGHP) the composition is skewed to low complexity. Residues 1247–1258 (PGHPGPMGPPGF) are compositionally biased toward pro residues. A compositionally biased stretch (gly residues) spans 1290-1299 (GMPGIGGSPG). 3 stretches are compositionally biased toward low complexity: residues 1333–1343 (DQGVPGPKGLQ), 1368–1391 (PGLK…SVGL), and 1398–1412 (PGFD…ETGP). A compositionally biased stretch (pro residues) spans 1413-1428 (FGPPGPRGFPGPPGPD). 3-hydroxyproline is present on Pro-1424. The 225-residue stretch at 1445-1669 (GFLVTRHSQT…SRCQVCMRRT (225 aa)) folds into the Collagen IV NC1 domain. 6 cysteine pairs are disulfide-bonded: Cys-1460-Cys-1551, Cys-1493-Cys-1548, Cys-1505-Cys-1511, Cys-1570-Cys-1665, Cys-1604-Cys-1662, and Cys-1616-Cys-1622. Met-1533 is covalently cross-linked (S-Lysyl-methionine sulfilimine (Met-Lys) (interchain with K-1651)). Lys-1651 participates in a covalent cross-link: S-Lysyl-methionine sulfilimine (Lys-Met) (interchain with M-1533).

Belongs to the type IV collagen family. There are six type IV collagen isoforms, alpha 1(IV)-alpha 6(IV), each of which can form a triple helix structure with 2 other chains to generate type IV collagen network. Interacts with EFEMP2. Lysines at the third position of the tripeptide repeating unit (G-X-Y) are hydroxylated. The modified lysines can be O-glycosylated. Post-translationally, contains 4-hydroxyproline. Prolines at the third position of the tripeptide repeating unit (G-X-Y) are hydroxylated in some or all of the chains. In terms of processing, contains 3-hydroxyproline. This modification occurs on the first proline residue in the sequence motif Gly-Pro-Hyp, where Hyp is 4-hydroxyproline. Type IV collagens contain numerous cysteine residues which are involved in inter- and intramolecular disulfide bonding. 12 of these, located in the NC1 domain, are conserved in all known type IV collagens. Post-translationally, the trimeric structure of the NC1 domains is stabilized by covalent bonds (sulfilimine cross-links) between Lys and Met residues. These cross-links are important for the mechanical stability of the basement membrane. Sulfilimine cross-link is catalyzed by PXDN. In terms of processing, proteolytic processing produces the C-terminal NC1 peptide, arresten. As to expression, detected in the basement membrane of the cornea (at protein level).

The protein localises to the secreted. It is found in the extracellular space. It localises to the extracellular matrix. Its subcellular location is the basement membrane. Functionally, type IV collagen is the major structural component of glomerular basement membranes (GBM), forming a 'chicken-wire' meshwork together with laminins, proteoglycans and entactin/nidogen. Arresten, comprising the C-terminal NC1 domain, inhibits angiogenesis and tumor formation. The C-terminal half is found to possess the anti-angiogenic activity. Specifically inhibits endothelial cell proliferation, migration and tube formation. In Mus musculus (Mouse), this protein is Collagen alpha-1(IV) chain.